The following is a 906-amino-acid chain: Ankyrin repeat and MYND domain-containing protein 1 (906 aa).

MORN repeat units follow at residues 16–38 (YHGQ…DGSS), 39–59 (FTGT…TKTM), and 61–83 (FQGL…DGSQ). An ANK 1 repeat occupies 282–311 (KGYTVLAAAAMHSHLDIVNLLLDFGADVNK). Positions 391 to 400 (SMQTPESSNM) are enriched in polar residues. Positions 391–411 (SMQTPESSNMLHKEEVSPVKT) are disordered. ANK repeat units follow at residues 479 to 508 (VRKM…DPNL), 511 to 540 (VPMQ…QTDI), 547 to 579 (QSLT…NVDA), 623 to 657 (GGRT…NPNV), 660 to 689 (SGHS…DPNL), and 701 to 732 (VVCD…DVLN). 8 residues coordinate Zn(2+): cysteine 845, cysteine 848, cysteine 859, cysteine 862, cysteine 868, cysteine 872, histidine 881, and cysteine 885. The segment at 845 to 885 (CYQCGRSIGVRLSPCPRCYGILTCSKYCKTKAWIEFHKKDC) adopts an MYND-type zinc-finger fold.

This chain is Ankyrin repeat and MYND domain-containing protein 1 (Ankmy1), found in Mus musculus (Mouse).